A 517-amino-acid polypeptide reads, in one-letter code: Methylmalonyl-CoA decarboxylase subunit alpha (517 aa).

The CoA carboxyltransferase N-terminal domain occupies 4 to 260 (AAKKIQDLQK…NNMEKAPEFG (257 aa)). The CoA carboxyltransferase C-terminal domain maps to 271 to 513 (ELDALMPDNP…REKLPAKKHG (243 aa)).

Belongs to the AccD/PCCB family. The methylmalonyl-CoA decarboxylase is composed of four subunits: the carboxyltransferase alpha subunit (MmdA), the tunnel beta subunit (MmdB), the biotin-containing gamma subunit (MmdC) and the delta subunit (MmdD).

It is found in the cell membrane. It catalyses the reaction (S)-methylmalonyl-CoA + Na(+)(in) + H(+)(out) = propanoyl-CoA + Na(+)(out) + CO2. Its function is as follows. Carboxyltransferase subunit of the sodium ion pump methylmalonyl-CoA decarboxylase, which converts the chemical energy of a decarboxylation reaction into an electrochemical gradient of Na(+) ions across the cytoplasmic membrane, thereby creating a sodium ion motive force that is used for ATP synthesis. The alpha subunit catalyzes the Na(+)-independent carboxyltransfer from methylmalonyl-CoA to the prosthetic biotin group located on the gamma subunit. The protein is Methylmalonyl-CoA decarboxylase subunit alpha of Propionigenium modestum.